A 275-amino-acid polypeptide reads, in one-letter code: Myb/SANT-like DNA-binding domain-containing protein 3 (275 aa).

Residues 13–78 (FSELEKSILL…QLKKCWENIK (66 aa)) enclose the Myb-like domain. Phosphoserine is present on residues Ser96 and Ser98. Lys154 participates in a covalent cross-link: Glycyl lysine isopeptide (Lys-Gly) (interchain with G-Cter in SUMO2). Positions 211–247 (QLIQMNEVHVAKIQQIERECEMAEEEHRIKMEVLNKK) form a coiled coil. Ser274 bears the Phosphoserine mark.

This sequence belongs to the MSANTD3 family.

The protein is Myb/SANT-like DNA-binding domain-containing protein 3 (MSANTD3) of Bos taurus (Bovine).